The following is a 118-amino-acid chain: Small ribosomal subunit protein uS13 (118 aa).

The interval Ser-94 to Lys-118 is disordered.

The protein belongs to the universal ribosomal protein uS13 family. In terms of assembly, part of the 30S ribosomal subunit. Forms a loose heterodimer with protein S19. Forms two bridges to the 50S subunit in the 70S ribosome.

Functionally, located at the top of the head of the 30S subunit, it contacts several helices of the 16S rRNA. In the 70S ribosome it contacts the 23S rRNA (bridge B1a) and protein L5 of the 50S subunit (bridge B1b), connecting the 2 subunits; these bridges are implicated in subunit movement. Contacts the tRNAs in the A and P-sites. The polypeptide is Small ribosomal subunit protein uS13 (Shewanella oneidensis (strain ATCC 700550 / JCM 31522 / CIP 106686 / LMG 19005 / NCIMB 14063 / MR-1)).